We begin with the raw amino-acid sequence, 249 residues long: Probable transcriptional regulatory protein ERGA_CDS_03720 (249 aa).

Residues 1–21 (MAGHSQFANIKHRKGAQDAKR) form a disordered region.

The protein belongs to the TACO1 family.

Its subcellular location is the cytoplasm. The chain is Probable transcriptional regulatory protein ERGA_CDS_03720 from Ehrlichia ruminantium (strain Gardel).